Here is a 1030-residue protein sequence, read N- to C-terminus: Subtilin biosynthesis protein SpaB (1030 aa).

It to S.epidermidis EpiB and L.lactis NisB.

The protein localises to the cell membrane. Its function is as follows. Involved in the post-translational modification of the lantibiotic subtilin. The protein is Subtilin biosynthesis protein SpaB (spaB) of Bacillus subtilis.